Here is a 404-residue protein sequence, read N- to C-terminus: Cysteine desulfurase IscS (404 aa).

Residues 75–76 (AT), asparagine 155, glutamine 183, and 203–205 (SGH) contribute to the pyridoxal 5'-phosphate site. Lysine 206 bears the N6-(pyridoxal phosphate)lysine mark. Residue threonine 243 coordinates pyridoxal 5'-phosphate. Cysteine 328 acts as the Cysteine persulfide intermediate in catalysis. [2Fe-2S] cluster is bound at residue cysteine 328.

The protein belongs to the class-V pyridoxal-phosphate-dependent aminotransferase family. NifS/IscS subfamily. As to quaternary structure, homodimer. Forms a heterotetramer with IscU, interacts with other sulfur acceptors. Pyridoxal 5'-phosphate is required as a cofactor.

Its subcellular location is the cytoplasm. It carries out the reaction (sulfur carrier)-H + L-cysteine = (sulfur carrier)-SH + L-alanine. Its pathway is cofactor biosynthesis; iron-sulfur cluster biosynthesis. Functionally, master enzyme that delivers sulfur to a number of partners involved in Fe-S cluster assembly, tRNA modification or cofactor biosynthesis. Catalyzes the removal of elemental sulfur atoms from cysteine to produce alanine. Functions as a sulfur delivery protein for Fe-S cluster synthesis onto IscU, an Fe-S scaffold assembly protein, as well as other S acceptor proteins. The sequence is that of Cysteine desulfurase IscS from Shewanella amazonensis (strain ATCC BAA-1098 / SB2B).